A 69-amino-acid polypeptide reads, in one-letter code: Alpha-conotoxin Mr1.7a (69 aa).

A signal peptide spans 1 to 21 (MGMRMMFTVFLLVVLATTVVS). The propeptide occupies 22–49 (FTSNRVLDPAFRRRNAAAKASDLIALNA). 2 positions are modified to 4-hydroxyproline; in Mr1.7b: Pro52 and Pro58. Cystine bridges form between Cys54-Cys60 and Cys55-Cys68. The segment at 56-58 (THP) is lacks the Ser-Xaa-Pro motif that is crucial for potent interaction with nAChR. Cysteine amide is present on Cys68.

The protein belongs to the conotoxin A superfamily. Two 4-hydroxyprolines have been detected by MS but the assignment of which of the three prolines is modified is uncertain. As to expression, expressed by the venom duct.

It is found in the secreted. Functionally, acts as a co-agonist with PNU (an alpha-7 nAChR-selective allosteric modulator) at the endogenous alpha-7/CHRNA7 nicotinic acetylcholine receptors (nAChR) when tested in human SH-SY5Y neuroblastoma cells. Is the third alpha-conotoxin that acts as an agonist (after alpha-conotoxin SrIA/SrIB). Also acts as an antagonist at human alpha-7 nAChRs heterologously expressed in Xenopus oocytes. Has possibly a distinct nAChR binding mode from other alpha-conotoxins, due to a different three residue motif (lacks the Ser-Xaa-Pro motif). In terms of biological role, acts as a weak partial agonist at alpha-7/CHRNA7 nicotinic acetylcholine receptors (nAChR) when tested in human SH-SY5Y neuroblastoma cells. Has possibly a distinct nAChR binding mode from other alpha-conotoxins, due to a different three residue motif (lacks the Ser-Xaa-Pro motif). The chain is Alpha-conotoxin Mr1.7a from Conus marmoreus (Marble cone).